Consider the following 87-residue polypeptide: Cytochrome c oxidase assembly factor 3, mitochondrial (87 aa).

The chain crosses the membrane as a helical span at residues 47–69 (NNLLTAGALGVSVLAIYGYSIFS).

Belongs to the COA3 family.

It localises to the mitochondrion membrane. In terms of biological role, plays a critical role in the biogenesis and activity of cytochrome c oxidase (COX) (complex IV). The sequence is that of Cytochrome c oxidase assembly factor 3, mitochondrial (Ccdc56) from Drosophila melanogaster (Fruit fly).